The chain runs to 337 residues: MRVLGIETSCDETGIAIYDDEKGLLANQLYSQVKLHADYGGVVPELASRDHVRKTVPLIQEALKESGLTAKDIDAVAYTAGPGLVGALLVGATVGRSLAFAWDVPAIPVHHMEGHLLAPMLEDNPPEFPFVALLVSGGHTQLISVTGIGQYELLGESIDDAAGEAFDKTAKLLGLDYPGGPLLSKMAAQGTAGRFVFPRPMTDRPGLDFSFSGLKTFAANTIRDNGTDDQTRADIARAFEDAVVDTLMIKCKRALDQTGFKRLVMAGGVSANRTLRAKLAEMMKKRRGEVFYARPEFCTDNGAMIAYAGMVRFKAGATADLGVSVRPRWPLAELPAA.

Positions 111 and 115 each coordinate Fe cation. Residues 134–138 (LVSGG), aspartate 167, glycine 180, and asparagine 272 each bind substrate. Position 300 (aspartate 300) interacts with Fe cation.

It belongs to the KAE1 / TsaD family. Fe(2+) is required as a cofactor.

The protein localises to the cytoplasm. The enzyme catalyses L-threonylcarbamoyladenylate + adenosine(37) in tRNA = N(6)-L-threonylcarbamoyladenosine(37) in tRNA + AMP + H(+). Functionally, required for the formation of a threonylcarbamoyl group on adenosine at position 37 (t(6)A37) in tRNAs that read codons beginning with adenine. Is involved in the transfer of the threonylcarbamoyl moiety of threonylcarbamoyl-AMP (TC-AMP) to the N6 group of A37, together with TsaE and TsaB. TsaD likely plays a direct catalytic role in this reaction. This Escherichia coli O45:K1 (strain S88 / ExPEC) protein is tRNA N6-adenosine threonylcarbamoyltransferase.